The following is a 419-amino-acid chain: Creatine kinase S-type, mitochondrial (419 aa).

The N-terminal 39 residues, 1–39 (MASIFSKLLTGRNASLLFATMGTSVLTTGYLLNRQKVCA), are a transit peptide targeting the mitochondrion. Positions 40 to 64 (EVREQPRLFPPSADYPDLRKHNNCM) are cardiolipin-binding. In terms of domain architecture, Phosphagen kinase N-terminal spans 46–132 (RLFPPSADYP…FDPVIKLRHN (87 aa)). The region spanning 159 to 401 (YVLSSRVRTG…NYLVDCEKKL (243 aa)) is the Phosphagen kinase C-terminal domain. Residues 162–166 (SSRVR) and His-225 each bind ATP. The residue at position 255 (Tyr-255) is a Phosphotyrosine. Residues Arg-270, Arg-326, 354–359 (RGTGGV), and Asp-369 each bind ATP. Thr-356 is modified (phosphothreonine).

It belongs to the ATP:guanido phosphotransferase family. As to quaternary structure, exists as an octamer composed of four CKMT2 homodimers. Sarcomere-specific. Found only in heart and skeletal muscles.

It is found in the mitochondrion inner membrane. It carries out the reaction creatine + ATP = N-phosphocreatine + ADP + H(+). Functionally, reversibly catalyzes the transfer of phosphate between ATP and various phosphogens (e.g. creatine phosphate). Creatine kinase isoenzymes play a central role in energy transduction in tissues with large, fluctuating energy demands, such as skeletal muscle, heart, brain and spermatozoa. This chain is Creatine kinase S-type, mitochondrial (CKMT2), found in Homo sapiens (Human).